The chain runs to 179 residues: Large ribosomal subunit protein uL5 (179 aa).

It belongs to the universal ribosomal protein uL5 family. Part of the 50S ribosomal subunit; part of the 5S rRNA/L5/L18/L25 subcomplex. Contacts the 5S rRNA and the P site tRNA. Forms a bridge to the 30S subunit in the 70S ribosome.

This is one of the proteins that bind and probably mediate the attachment of the 5S RNA into the large ribosomal subunit, where it forms part of the central protuberance. In the 70S ribosome it contacts protein S13 of the 30S subunit (bridge B1b), connecting the 2 subunits; this bridge is implicated in subunit movement. Contacts the P site tRNA; the 5S rRNA and some of its associated proteins might help stabilize positioning of ribosome-bound tRNAs. This Natranaerobius thermophilus (strain ATCC BAA-1301 / DSM 18059 / JW/NM-WN-LF) protein is Large ribosomal subunit protein uL5.